Here is a 218-residue protein sequence, read N- to C-terminus: Eukaryotic translation initiation factor 3 subunit K (218 aa).

Alanine 2 carries the post-translational modification N-acetylalanine. Threonine 28 bears the Phosphothreonine mark. The PCI domain occupies 42–204; that stretch reads YDLEANLAVL…SIKPKNIVEK (163 aa). Phosphoserine is present on serine 217.

It belongs to the eIF-3 subunit K family. In terms of assembly, component of the eukaryotic translation initiation factor 3 (eIF-3) complex, which is composed of 13 subunits: EIF3A, EIF3B, EIF3C, EIF3D, EIF3E, EIF3F, EIF3G, EIF3H, EIF3I, EIF3J, EIF3K, EIF3L and EIF3M. The eIF-3 complex appears to include 3 stable modules: module A is composed of EIF3A, EIF3B, EIF3G and EIF3I; module B is composed of EIF3F, EIF3H, and EIF3M; and module C is composed of EIF3C, EIF3D, EIF3E, EIF3K and EIF3L. EIF3C of module C binds EIF3B of module A and EIF3H of module B, thereby linking the three modules. EIF3J is a labile subunit that binds to the eIF-3 complex via EIF3B. The eIF-3 complex interacts with RPS6KB1 under conditions of nutrient depletion. Mitogenic stimulation leads to binding and activation of a complex composed of MTOR and RPTOR, leading to phosphorylation and release of RPS6KB1 and binding of EIF4B to eIF-3. Interacts with CCND3, but not with CCND1 and CCND2.

The protein localises to the nucleus. Its subcellular location is the cytoplasm. Component of the eukaryotic translation initiation factor 3 (eIF-3) complex, which is required for several steps in the initiation of protein synthesis. The eIF-3 complex associates with the 40S ribosome and facilitates the recruitment of eIF-1, eIF-1A, eIF-2:GTP:methionyl-tRNAi and eIF-5 to form the 43S pre-initiation complex (43S PIC). The eIF-3 complex stimulates mRNA recruitment to the 43S PIC and scanning of the mRNA for AUG recognition. The eIF-3 complex is also required for disassembly and recycling of post-termination ribosomal complexes and subsequently prevents premature joining of the 40S and 60S ribosomal subunits prior to initiation. The eIF-3 complex specifically targets and initiates translation of a subset of mRNAs involved in cell proliferation, including cell cycling, differentiation and apoptosis, and uses different modes of RNA stem-loop binding to exert either translational activation or repression. This is Eukaryotic translation initiation factor 3 subunit K from Bos taurus (Bovine).